The sequence spans 772 residues: Phenylalanine--tRNA ligase beta subunit (772 aa).

The region spanning 40 to 158 is the tRNA-binding domain; sequence IKPSTNLVFA…DHYKTPNQIF (119 aa). Residues 397-468 enclose the B5 domain; it reads SVHNVIKNKI…KKISIQEIKP (72 aa). Mg(2+) is bound by residues Asp446, Asp452, Glu455, and Asp456. Residues 691–772 form the FDX-ACB domain; it reads SMYHDVIRDI…QEVNNYLKQF (82 aa).

Belongs to the phenylalanyl-tRNA synthetase beta subunit family. Type 1 subfamily. In terms of assembly, tetramer of two alpha and two beta subunits. Requires Mg(2+) as cofactor.

Its subcellular location is the cytoplasm. The catalysed reaction is tRNA(Phe) + L-phenylalanine + ATP = L-phenylalanyl-tRNA(Phe) + AMP + diphosphate + H(+). The protein is Phenylalanine--tRNA ligase beta subunit (pheT) of Ureaplasma parvum serovar 3 (strain ATCC 700970).